The following is a 212-amino-acid chain: MITLALSKGRIFEETLPLLRAAGIEVLEDPEKSRKLILTTNQPNVRVLVVRASDVPTYVQYGGADLGITGKDTLLEHGSDGLYQPLDLQIAKCRISVAVRADFDYASAVKQGSRLRVATKYVAISREFFAAKGVHVDLIKLYGSMELAPLVGLSDAIVDLVSTGNTLKANHLVEVEHIMDISSRLVVNQAALKLKQAPIRKIIDAFASAISQ.

The protein belongs to the ATP phosphoribosyltransferase family. Short subfamily. Heteromultimer composed of HisG and HisZ subunits.

It localises to the cytoplasm. It carries out the reaction 1-(5-phospho-beta-D-ribosyl)-ATP + diphosphate = 5-phospho-alpha-D-ribose 1-diphosphate + ATP. It functions in the pathway amino-acid biosynthesis; L-histidine biosynthesis; L-histidine from 5-phospho-alpha-D-ribose 1-diphosphate: step 1/9. Catalyzes the condensation of ATP and 5-phosphoribose 1-diphosphate to form N'-(5'-phosphoribosyl)-ATP (PR-ATP). Has a crucial role in the pathway because the rate of histidine biosynthesis seems to be controlled primarily by regulation of HisG enzymatic activity. The chain is ATP phosphoribosyltransferase from Albidiferax ferrireducens (strain ATCC BAA-621 / DSM 15236 / T118) (Rhodoferax ferrireducens).